Consider the following 201-residue polypeptide: Dephospho-CoA kinase (201 aa).

Residues 2–201 (MIGLTGGIAS…KRWKVIPEDQ (200 aa)) form the DPCK domain. 10-15 (ASGKSS) provides a ligand contact to ATP.

It belongs to the CoaE family.

The protein resides in the cytoplasm. The catalysed reaction is 3'-dephospho-CoA + ATP = ADP + CoA + H(+). It participates in cofactor biosynthesis; coenzyme A biosynthesis; CoA from (R)-pantothenate: step 5/5. Its function is as follows. Catalyzes the phosphorylation of the 3'-hydroxyl group of dephosphocoenzyme A to form coenzyme A. The chain is Dephospho-CoA kinase from Halalkalibacterium halodurans (strain ATCC BAA-125 / DSM 18197 / FERM 7344 / JCM 9153 / C-125) (Bacillus halodurans).